The following is a 476-amino-acid chain: Aspartyl/glutamyl-tRNA(Asn/Gln) amidotransferase subunit B (476 aa).

Belongs to the GatB/GatE family. GatB subfamily. Heterotrimer of A, B and C subunits.

The enzyme catalyses L-glutamyl-tRNA(Gln) + L-glutamine + ATP + H2O = L-glutaminyl-tRNA(Gln) + L-glutamate + ADP + phosphate + H(+). The catalysed reaction is L-aspartyl-tRNA(Asn) + L-glutamine + ATP + H2O = L-asparaginyl-tRNA(Asn) + L-glutamate + ADP + phosphate + 2 H(+). Allows the formation of correctly charged Asn-tRNA(Asn) or Gln-tRNA(Gln) through the transamidation of misacylated Asp-tRNA(Asn) or Glu-tRNA(Gln) in organisms which lack either or both of asparaginyl-tRNA or glutaminyl-tRNA synthetases. The reaction takes place in the presence of glutamine and ATP through an activated phospho-Asp-tRNA(Asn) or phospho-Glu-tRNA(Gln). This is Aspartyl/glutamyl-tRNA(Asn/Gln) amidotransferase subunit B from Clostridium botulinum (strain ATCC 19397 / Type A).